Consider the following 183-residue polypeptide: Inner membrane-spanning protein YciB (183 aa).

Helical transmembrane passes span 19 to 39 (LYGVQQAAITLVIATVIQLIV), 53 to 73 (IMGIFVVFFGILTAYFNDLNF), 76 to 96 (WKVTIINGLFAAVLLVSQFVF), 121 to 141 (LGWAGFFIICMLLNIVISYYF), and 151 to 171 (TFGFTGLSLIAAIATGVYLYP).

The protein belongs to the YciB family.

It localises to the cell inner membrane. Its function is as follows. Plays a role in cell envelope biogenesis, maintenance of cell envelope integrity and membrane homeostasis. The sequence is that of Inner membrane-spanning protein YciB from Actinobacillus pleuropneumoniae serotype 7 (strain AP76).